Reading from the N-terminus, the 776-residue chain is Genome polyprotein (776 aa).

Residues 1–27 (MAGKAVLKGKGGGPPRRASKVAPKKTR) are disordered. The Cytoplasmic portion of the chain corresponds to 1 to 98 (MAGKAVLKGK…LHRRGSRRTT (98 aa)). The span at 17–27 (RASKVAPKKTR) shows a compositional bias: basic residues. Residues 33-68 (MPNGLVLMRMLGVLWHALTGTARSPVLKAFWKVVPL) form a hydrophobic; homodimerization of capsid protein C region. Positions 97-117 (TTIDWMTPLLITVMLGMCLTA) are cleaved as a propeptide — ER anchor for the protein C, removed in mature form by serine protease NS3. The chain crosses the membrane as a helical span at residues 99–117 (IDWMTPLLITVMLGMCLTA). Over 118–242 (TVRRERDGSM…HLTRVEGWVW (125 aa)) the chain is Extracellular. N144 is a glycosylation site (N-linked (GlcNAc...) asparagine; by host). The helical transmembrane segment at 243–260 (KNKLFTLSLVMVAWLMVD) threads the bilayer. Residue G261 is a topological domain, cytoplasmic. A helical transmembrane segment spans residues 262–280 (LLPRILIVVVALALVPAYA). The Extracellular segment spans residues 281–727 (SRCTHLENRD…HTVLGGAFNT (447 aa)). 4 cysteine pairs are disulfide-bonded: C283–C310, C340–C396, C354–C385, and C372–C401. Residue N434 is glycosylated (N-linked (GlcNAc...) asparagine; by host). Intrachain disulfides connect C466-C570 and C587-C618. An intramembrane region (helical) is located at residues 728-748 (LLGGVGFLPKILLGVAMAWLG). Residues 749 to 755 (LNMRNPT) lie on the Extracellular side of the membrane. An intramembrane region (helical) is located at residues 756 to 776 (LSMGFLLSGGLVLAMTLGVGA).

Post-translationally, specific enzymatic cleavages in vivo yield mature proteins Peptide 2K acts as a signal sequence and is removed from the N-terminus of NS4B by the host signal peptidase in the ER lumen. Signal cleavage at the 2K-4B site requires a prior NS3 protease-mediated cleavage at the 4A-2K site.

It is found in the virion. The protein resides in the secreted. The protein localises to the virion membrane. Its subcellular location is the host endoplasmic reticulum membrane. In terms of biological role, capsid protein C self-assembles to form an icosahedral capsid about 30 nm in diameter. The capsid encapsulates the genomic RNA. PrM acts as a chaperone for envelope protein E during intracellular virion assembly by masking and inactivating envelope protein E fusion peptide. prM is matured in the last step of virion assembly, presumably to avoid catastrophic activation of the viral fusion peptide induced by the acidic pH of the trans-Golgi network. After cleavage by host furin, the pr peptide is released in the extracellular medium and small envelope protein M and envelope protein E homodimers are dissociated. Its function is as follows. Envelope protein E binding to host cell surface receptor is followed by virus internalization through clathrin-mediated endocytosis. Envelope protein E is subsequently involved in membrane fusion between virion and host late endosomes. Synthesized as a homodimer with prM which acts as a chaperone for envelope protein E. After cleavage of prM, envelope protein E dissociate from small envelope protein M and homodimerizes. In Homo sapiens (Human), this protein is Genome polyprotein.